A 508-amino-acid polypeptide reads, in one-letter code: Photosystem II CP47 reaction center protein (508 aa).

6 helical membrane-spanning segments follow: residues 21–36 (SVHI…WAGS), 101–115 (IVFS…IWHW), 140–156 (GIHL…FGAF), 203–218 (IAAG…FHLS), 237–252 (VLSS…AFVV), and 457–472 (TFAL…HGAR).

It belongs to the PsbB/PsbC family. PsbB subfamily. As to quaternary structure, PSII is composed of 1 copy each of membrane proteins PsbA, PsbB, PsbC, PsbD, PsbE, PsbF, PsbH, PsbI, PsbJ, PsbK, PsbL, PsbM, PsbT, PsbX, PsbY, PsbZ, Psb30/Ycf12, at least 3 peripheral proteins of the oxygen-evolving complex and a large number of cofactors. It forms dimeric complexes. Binds multiple chlorophylls. PSII binds additional chlorophylls, carotenoids and specific lipids. is required as a cofactor.

It is found in the plastid. The protein resides in the chloroplast thylakoid membrane. Functionally, one of the components of the core complex of photosystem II (PSII). It binds chlorophyll and helps catalyze the primary light-induced photochemical processes of PSII. PSII is a light-driven water:plastoquinone oxidoreductase, using light energy to abstract electrons from H(2)O, generating O(2) and a proton gradient subsequently used for ATP formation. In Calycanthus floridus var. glaucus (Eastern sweetshrub), this protein is Photosystem II CP47 reaction center protein.